The chain runs to 894 residues: Peroxisomal hydratase-dehydrogenase-epimerase (894 aa).

Short-chain dehydrogenase like regions lie at residues 6–230 (RFDG…HKNN) and 311–523 (DFKG…CSDK). 7 residues coordinate NADP(+): V14, K53, N99, R132, Y164, K168, and A197. Y164 (proton acceptor) is an active-site residue. The active-site Lowers pKa of active site Tyr is K168. Y458 (proton acceptor) is an active-site residue. (3R)-3-hydroxydecanoyl-CoA contacts are provided by H693, G694, and K723. Residues 763-782 (KKPADRGASTAANKPPARSP) form a disordered region. The MaoC-like domain maps to 776–887 (KPPARSPDAV…VKETGKLAIS (112 aa)). (3R)-3-hydroxydecanoyl-CoA is bound by residues D803, N805, G826, F851, and G853.

It belongs to the short-chain dehydrogenases/reductases (SDR) family. As to quaternary structure, monomer.

It localises to the peroxisome. It carries out the reaction a (3R)-3-hydroxyacyl-CoA = a (2E)-enoyl-CoA + H2O. The catalysed reaction is a (3R)-3-hydroxyacyl-CoA + NAD(+) = a 3-oxoacyl-CoA + NADH + H(+). It participates in lipid metabolism; fatty acid beta-oxidation. In terms of biological role, second trifunctional enzyme acting on the beta-oxidation pathway for fatty acids, possessing hydratase-dehydrogenase-epimerase activities. Converts trans-2-enoyl-CoA via D-3-hydroxyacyl-CoA to 3-ketoacyl-CoA. The protein is Peroxisomal hydratase-dehydrogenase-epimerase (fox-2) of Neurospora crassa (strain ATCC 24698 / 74-OR23-1A / CBS 708.71 / DSM 1257 / FGSC 987).